The sequence spans 284 residues: 4-diphosphocytidyl-2-C-methyl-D-erythritol kinase (284 aa).

The active site involves Lys-14. 97 to 107 (PMGGGVGGGSS) is a binding site for ATP. Residue Asp-139 is part of the active site.

The protein belongs to the GHMP kinase family. IspE subfamily.

The enzyme catalyses 4-CDP-2-C-methyl-D-erythritol + ATP = 4-CDP-2-C-methyl-D-erythritol 2-phosphate + ADP + H(+). It participates in isoprenoid biosynthesis; isopentenyl diphosphate biosynthesis via DXP pathway; isopentenyl diphosphate from 1-deoxy-D-xylulose 5-phosphate: step 3/6. Catalyzes the phosphorylation of the position 2 hydroxy group of 4-diphosphocytidyl-2C-methyl-D-erythritol. The sequence is that of 4-diphosphocytidyl-2-C-methyl-D-erythritol kinase from Pseudoalteromonas translucida (strain TAC 125).